Consider the following 199-residue polypeptide: Adenylyl-sulfate kinase (199 aa).

Residue 31-38 (GLSGSGKS) participates in ATP binding. The active-site Phosphoserine intermediate is S105.

Belongs to the APS kinase family.

The catalysed reaction is adenosine 5'-phosphosulfate + ATP = 3'-phosphoadenylyl sulfate + ADP + H(+). It participates in sulfur metabolism; hydrogen sulfide biosynthesis; sulfite from sulfate: step 2/3. Its function is as follows. Catalyzes the synthesis of activated sulfate. The protein is Adenylyl-sulfate kinase of Marinobacter nauticus (strain ATCC 700491 / DSM 11845 / VT8) (Marinobacter aquaeolei).